The following is a 193-amino-acid chain: Phosphoheptose isomerase (193 aa).

Positions 37-193 (LADSFKAGGK…QLIEKEMVKA (157 aa)) constitute an SIS domain. 52–54 (NGG) serves as a coordination point for substrate. Positions 61 and 65 each coordinate Zn(2+). Residues E65, 93 to 94 (ND), 119 to 121 (STS), S124, and Q172 contribute to the substrate site. Positions 172 and 180 each coordinate Zn(2+).

It belongs to the SIS family. GmhA subfamily. In terms of assembly, homotetramer. Zn(2+) is required as a cofactor.

Its subcellular location is the cytoplasm. The enzyme catalyses 2 D-sedoheptulose 7-phosphate = D-glycero-alpha-D-manno-heptose 7-phosphate + D-glycero-beta-D-manno-heptose 7-phosphate. The protein operates within carbohydrate biosynthesis; D-glycero-D-manno-heptose 7-phosphate biosynthesis; D-glycero-alpha-D-manno-heptose 7-phosphate and D-glycero-beta-D-manno-heptose 7-phosphate from sedoheptulose 7-phosphate: step 1/1. Its pathway is bacterial outer membrane biogenesis; LPS core biosynthesis. Catalyzes the isomerization of sedoheptulose 7-phosphate in D-glycero-D-manno-heptose 7-phosphate. The chain is Phosphoheptose isomerase from Yersinia pestis.